The sequence spans 260 residues: Snake venom serine protease homolog 2A (260 aa).

An N-terminal signal peptide occupies residues 1–18; that stretch reads MVLIRVLANLLILQLSYA. Residues 19–24 constitute a propeptide that is removed on maturation; sequence QKSSEL. A Peptidase S1 domain is found at 25-251; that stretch reads IIGGDECNIN…HLDWIKSIIA (227 aa). Intrachain disulfides connect Cys31–Cys165, Cys52–Cys68, Cys100–Cys258, Cys144–Cys212, Cys176–Cys191, and Cys202–Cys227. 3 N-linked (GlcNAc...) asparagine glycosylation sites follow: Asn83, Asn123, and Asn124.

Belongs to the peptidase S1 family. Snake venom subfamily. In terms of tissue distribution, expressed by the venom gland.

The protein resides in the secreted. In terms of biological role, snake venom serine protease homolog that may act in the hemostasis system of the prey. This chain is Snake venom serine protease homolog 2A (TLG2A), found in Craspedocephalus gramineus (Bamboo pit viper).